Here is a 207-residue protein sequence, read N- to C-terminus: MSRHSTSSVTETTAKNMLWGSELNQEKQTCTFRGQGEKKDSCKLLLSTICLGEKAKEEVNRVEVLSQEGRKPPITIATLKASVLPMVTVSGIELSPPVTFRLRTGSGPVFLSGLECYETSDLTWEDDEEEEEEEEEEDEDEDADISLEEIPVKQVKRVAPQKQMSIAKKKKVEKEEDETVVRPSPQDKSPWKKEKSTPRAKKPVTKK.

Over residues 1–15 the composition is skewed to polar residues; the sequence is MSRHSTSSVTETTAK. Disordered regions lie at residues 1-20 and 121-207; these read MSRHSTSSVTETTAKNMLWG and DLTW…VTKK. A compositionally biased stretch (acidic residues) spans 123 to 147; it reads TWEDDEEEEEEEEEEDEDEDADISL. Residues 129–152 are acidic tract A2; the sequence is EEEEEEEEEDEDEDADISLEEIPV. The short motif at 165-180 is the Bipartite nuclear localization signal element; it reads SIAKKKKVEKEEDETV. Basic residues predominate over residues 198-207; sequence PRAKKPVTKK.

The protein belongs to the nucleoplasmin family. In terms of assembly, homopentamer, when bound to H2A-H2B dimers only. Homodecamer of two stacked pentamers, when bound to H2A-H2B dimers and H3-H4 tetramers simultaneously. Ovary specific.

The protein resides in the nucleus. In terms of biological role, core histones chaperone involved in chromatin reprogramming, specially during fertilization and early embryonic development. Probably involved in sperm DNA decondensation during fertilization. The sequence is that of Nucleoplasmin-2 (Npm2) from Mus musculus (Mouse).